We begin with the raw amino-acid sequence, 433 residues long: Probable RNA 3'-terminal phosphate cyclase (433 aa).

Low complexity predominate over residues 1–10; the sequence is MGKNKNYNKN. The interval 1 to 28 is disordered; the sequence is MGKNKNYNKNQFKKSKTNNDTTVAQQQQ. Residues 18-28 show a composition bias toward polar residues; sequence NNDTTVAQQQQ. Residues Q137 and 328–332 each bind ATP; that span reads YLQDQ. H354 (tele-AMP-histidine intermediate) is an active-site residue. Residues 400–433 are disordered; sequence LNNNNNNSNSNTTTTTTTTTISTTTIDNQNSEEK. Low complexity predominate over residues 401 to 425; that stretch reads NNNNNNSNSNTTTTTTTTTISTTTI.

This sequence belongs to the RNA 3'-terminal cyclase family. Type 1 subfamily.

It localises to the nucleus. Its subcellular location is the nucleoplasm. It carries out the reaction a 3'-end 3'-phospho-ribonucleotide-RNA + ATP = a 3'-end 2',3'-cyclophospho-ribonucleotide-RNA + AMP + diphosphate. Its function is as follows. Catalyzes the conversion of 3'-phosphate to a 2',3'-cyclic phosphodiester at the end of RNA. The mechanism of action of the enzyme occurs in 3 steps: (A) adenylation of the enzyme by ATP; (B) transfer of adenylate to an RNA-N3'P to produce RNA-N3'PP5'A; (C) and attack of the adjacent 2'-hydroxyl on the 3'-phosphorus in the diester linkage to produce the cyclic end product. The biological role of this enzyme is unknown but it is likely to function in some aspects of cellular RNA processing. The protein is Probable RNA 3'-terminal phosphate cyclase (rtca) of Dictyostelium discoideum (Social amoeba).